The primary structure comprises 131 residues: UPF0344 protein Sca_0577 (131 aa).

4 helical membrane passes run 1-21 (MLHL…VSYI), 42-62 (LFLV…FATA), 69-89 (LLTL…VTLV), and 99-119 (GLFW…IILP).

The protein belongs to the UPF0344 family.

It localises to the cell membrane. This is UPF0344 protein Sca_0577 from Staphylococcus carnosus (strain TM300).